The following is a 325-amino-acid chain: Elongation factor P--(R)-beta-lysine ligase (325 aa).

76-78 serves as a coordination point for substrate; sequence SPE. ATP contacts are provided by residues 100–102 and asparagine 109; that span reads RNE. Position 118 (tyrosine 118) interacts with substrate. 244–245 lines the ATP pocket; that stretch reads EL. A substrate-binding site is contributed by glutamate 251. An ATP-binding site is contributed by glycine 300.

The protein belongs to the class-II aminoacyl-tRNA synthetase family. EpmA subfamily. Homodimer.

The catalysed reaction is D-beta-lysine + L-lysyl-[protein] + ATP = N(6)-((3R)-3,6-diaminohexanoyl)-L-lysyl-[protein] + AMP + diphosphate + H(+). With EpmB is involved in the beta-lysylation step of the post-translational modification of translation elongation factor P (EF-P). Catalyzes the ATP-dependent activation of (R)-beta-lysine produced by EpmB, forming a lysyl-adenylate, from which the beta-lysyl moiety is then transferred to the epsilon-amino group of a conserved specific lysine residue in EF-P. This Enterobacter sp. (strain 638) protein is Elongation factor P--(R)-beta-lysine ligase.